We begin with the raw amino-acid sequence, 200 residues long: Dephospho-CoA kinase (200 aa).

In terms of domain architecture, DPCK spans Val-4–Asp-200. An ATP-binding site is contributed by Ala-12–Thr-17.

The protein belongs to the CoaE family.

The protein resides in the cytoplasm. The catalysed reaction is 3'-dephospho-CoA + ATP = ADP + CoA + H(+). The protein operates within cofactor biosynthesis; coenzyme A biosynthesis; CoA from (R)-pantothenate: step 5/5. Functionally, catalyzes the phosphorylation of the 3'-hydroxyl group of dephosphocoenzyme A to form coenzyme A. The chain is Dephospho-CoA kinase from Bacillus cereus (strain ATCC 14579 / DSM 31 / CCUG 7414 / JCM 2152 / NBRC 15305 / NCIMB 9373 / NCTC 2599 / NRRL B-3711).